A 233-amino-acid polypeptide reads, in one-letter code: Large ribosomal subunit protein uL1 (233 aa).

It belongs to the universal ribosomal protein uL1 family. As to quaternary structure, part of the 50S ribosomal subunit.

Binds directly to 23S rRNA. The L1 stalk is quite mobile in the ribosome, and is involved in E site tRNA release. Its function is as follows. Protein L1 is also a translational repressor protein, it controls the translation of the L11 operon by binding to its mRNA. This chain is Large ribosomal subunit protein uL1, found in Shewanella sp. (strain MR-4).